A 301-amino-acid chain; its full sequence is tRNA-cytidine(32) 2-sulfurtransferase (301 aa).

The PP-loop motif signature appears at 55-60 (SGGKDS). [4Fe-4S] cluster is bound by residues cysteine 130, cysteine 133, and cysteine 221.

This sequence belongs to the TtcA family. In terms of assembly, homodimer. It depends on Mg(2+) as a cofactor. The cofactor is [4Fe-4S] cluster.

The protein localises to the cytoplasm. It carries out the reaction cytidine(32) in tRNA + S-sulfanyl-L-cysteinyl-[cysteine desulfurase] + AH2 + ATP = 2-thiocytidine(32) in tRNA + L-cysteinyl-[cysteine desulfurase] + A + AMP + diphosphate + H(+). It participates in tRNA modification. Functionally, catalyzes the ATP-dependent 2-thiolation of cytidine in position 32 of tRNA, to form 2-thiocytidine (s(2)C32). The sulfur atoms are provided by the cysteine/cysteine desulfurase (IscS) system. This chain is tRNA-cytidine(32) 2-sulfurtransferase, found in Acinetobacter baumannii (strain SDF).